The following is a 107-amino-acid chain: MGRKRFITDSYPVVKKREGPPGHSKGELAPELGEDTQSLSQEETELELLRQFDLAWQYGPCTGITRLQRWSRAEQMGLKPPLEVYQVLKAHPEDPHFQCSLWHLYPL.

Residues 1-16 (MGRKRFITDSYPVVKK) carry the PCNA-interaction protein motif (PIP box) motif. The segment at 1–40 (MGRKRFITDSYPVVKKREGPPGHSKGELAPELGEDTQSLS) is disordered. The span at 15–28 (KKREGPPGHSKGEL) shows a compositional bias: basic and acidic residues.

Belongs to the DNA polymerase delta subunit 4 family. In terms of assembly, component of the tetrameric DNA polymerase delta complex (Pol-delta4), which consists of POLD1/p125, POLD2/p50, POLD3/p66/p68 and POLD4/p12, with POLD1 bearing DNA polymerase and 3' to 5' proofreading exonuclease activities. Within this complex, directly interacts with POLD1 and POLD2. Directly interacts with PCNA, as do POLD1 and POLD3; this interaction stimulates Pol-delta4 polymerase activity. As POLD1 and POLD2, directly interacts with WRNIP1; this interaction stimulates DNA polymerase delta-mediated DNA synthesis, independently of the presence of PCNA, possibly by increasing initiation frequency. Upon genotoxic stress induced by DNA damaging agents or by replication stress, POLD4 is proteolytically degraded and Pol-delta4 is converted into a trimeric form of the complex (Pol-delta3) that has an increased proofreading activity. The DNA polymerase delta complex interacts with POLDIP2; this interaction is probably mediated through direct binding to POLD2. Ubiquitinated; undergoes 'Lys-48'-linked polyubiquitination in response to UV irradiation or treatment with an alkylating agent, leading to proteasomal degradation. This modification is mediated, at least in part, by RNF8. Post-translationally, ubiquitinated; undergoes 'Lys-48'-linked ubiquitination in response to UV irradiation, leading to proteasomal degradation. This modification is partly mediated by RNF8 and by the DCX(DTL) E3 ubiquitin ligase complex (also called CRL4(CDT2)). Efficient degradation requires the presence of PCNA and is required for the inhibition of fork progression after DNA damage.

The protein localises to the nucleus. Its function is as follows. As a component of the tetrameric DNA polymerase delta complex (Pol-delta4), plays a role in high fidelity genome replication and repair. Within this complex, increases the rate of DNA synthesis and decreases fidelity by regulating POLD1 polymerase and proofreading 3' to 5' exonuclease activity. Pol-delta4 participates in Okazaki fragment processing, through both the short flap pathway, as well as a nick translation system. Under conditions of DNA replication stress, required for the repair of broken replication forks through break-induced replication (BIR), a mechanism that may induce segmental genomic duplications of up to 200 kb. Involved in Pol-delta4 translesion synthesis (TLS) of templates carrying O6-methylguanine or abasic sites. Its degradation in response to DNA damage is required for the inhibition of fork progression and cell survival. The sequence is that of DNA polymerase delta subunit 4 (Pold4) from Mus musculus (Mouse).